Consider the following 249-residue polypeptide: Triosephosphate isomerase (249 aa).

Residue 9-11 (NWK) participates in substrate binding. His95 (electrophile) is an active-site residue. Glu165 (proton acceptor) is an active-site residue. Substrate contacts are provided by residues Gly171, Ser211, and 232-233 (GG).

Belongs to the triosephosphate isomerase family. Homodimer.

The protein localises to the cytoplasm. It catalyses the reaction D-glyceraldehyde 3-phosphate = dihydroxyacetone phosphate. It functions in the pathway carbohydrate biosynthesis; gluconeogenesis. Its pathway is carbohydrate degradation; glycolysis; D-glyceraldehyde 3-phosphate from glycerone phosphate: step 1/1. Its function is as follows. Involved in the gluconeogenesis. Catalyzes stereospecifically the conversion of dihydroxyacetone phosphate (DHAP) to D-glyceraldehyde-3-phosphate (G3P). In Chlorobium phaeobacteroides (strain DSM 266 / SMG 266 / 2430), this protein is Triosephosphate isomerase.